Reading from the N-terminus, the 139-residue chain is NADPH-dependent 7-cyano-7-deazaguanine reductase (139 aa).

Residue C34 is the Thioimide intermediate of the active site. D41 functions as the Proton donor in the catalytic mechanism. Substrate contacts are provided by residues V56–L58 and H75–E76.

This sequence belongs to the GTP cyclohydrolase I family. QueF type 1 subfamily.

It localises to the cytoplasm. The enzyme catalyses 7-aminomethyl-7-carbaguanine + 2 NADP(+) = 7-cyano-7-deazaguanine + 2 NADPH + 3 H(+). It participates in tRNA modification; tRNA-queuosine biosynthesis. Its function is as follows. Catalyzes the NADPH-dependent reduction of 7-cyano-7-deazaguanine (preQ0) to 7-aminomethyl-7-deazaguanine (preQ1). The chain is NADPH-dependent 7-cyano-7-deazaguanine reductase from Nitrosospira multiformis (strain ATCC 25196 / NCIMB 11849 / C 71).